The chain runs to 431 residues: tRNA(Ile)-lysidine synthase (431 aa).

An ATP-binding site is contributed by 19–24 (STGIDS).

Belongs to the tRNA(Ile)-lysidine synthase family.

The protein localises to the cytoplasm. It catalyses the reaction cytidine(34) in tRNA(Ile2) + L-lysine + ATP = lysidine(34) in tRNA(Ile2) + AMP + diphosphate + H(+). Functionally, ligates lysine onto the cytidine present at position 34 of the AUA codon-specific tRNA(Ile) that contains the anticodon CAU, in an ATP-dependent manner. Cytidine is converted to lysidine, thus changing the amino acid specificity of the tRNA from methionine to isoleucine. This chain is tRNA(Ile)-lysidine synthase, found in Staphylococcus aureus (strain COL).